The chain runs to 364 residues: Probable G-protein coupled receptor AH9.4 (364 aa).

Position 1 (Met-1) is a topological domain, extracellular. Residues 2 to 22 form a helical membrane-spanning segment; sequence AFLQSAYLVMVFTVPIAGVIL. Residues 23–48 are Cytoplasmic-facing; sequence NTYVLRKLIRVARKSVVRFETTSGLP. Residues 49–69 form a helical membrane-spanning segment; that stretch reads LAAMSVGDSITLCALLMQAIF. Over 70 to 89 the chain is Extracellular; sequence HITPKGEVPTVVLSSICKFG. A helical transmembrane segment spans residues 90–110; the sequence is IFLIHSTSAFSVWCWFFLSVL. At 111 to 130 the chain is on the cytoplasmic side; it reads RYIAVFHPFKYRTIWRQPRN. A helical transmembrane segment spans residues 131–151; the sequence is ALKFLAGAVGMFQIYTLIFVT. Residues 152–177 are Extracellular-facing; it reads YRQEEKSCGEYDVFHESAFKHVHLLD. A helical membrane pass occupies residues 178-198; the sequence is IFLFYAIPSLLRITLDFLVLI. Over 199–277 the chain is Cytoplasmic; it reads HCYSPFSVEG…KKKTAMVMRS (79 aa). A helical membrane pass occupies residues 278–298; sequence ILISVLNLLLNLPSHIFRAWA. Topologically, residues 299 to 315 are extracellular; the sequence is SYDESSLENEIVRTLEP. Residues 316–336 traverse the membrane as a helical segment; the sequence is IAQMMYFSQFACNAFYLATSI. The Cytoplasmic portion of the chain corresponds to 337–364; that stretch reads YETNGSPRNTVISSSNRHVSRCISDDEA.

The protein belongs to the G-protein coupled receptor 1 family.

It is found in the cell membrane. Not known. Putative receptor. The protein is Probable G-protein coupled receptor AH9.4 of Caenorhabditis elegans.